We begin with the raw amino-acid sequence, 246 residues long: MSKRITRVLFKISGESLSTDSGNRIDEVRLSRLVAELRAVRNCDIETALVIGGGNILRGLAQQKELQINRVSADQMGMLATLINGMAVADALKADDIPCLLTSTLSCPQLADLYTPQKSEEALNQGKIVICTTGTGSPYLTTDTGAALRACELKVDILLKATMHVDGVYNKDPRSFSDAVKYDRISFKDFLAQGLGVMDASAVSLCMDSNIPIRVFSFVKHSLEQAIFDENIGTLIGEEATHVHSS.

Lysine 11–glycine 14 contacts ATP. Glycine 53 is a UMP binding site. ATP-binding residues include glycine 54 and arginine 58. UMP is bound by residues aspartate 74 and threonine 135–threonine 142. Threonine 162, tyrosine 169, and aspartate 172 together coordinate ATP.

This sequence belongs to the UMP kinase family. As to quaternary structure, homohexamer.

It localises to the cytoplasm. The enzyme catalyses UMP + ATP = UDP + ADP. It functions in the pathway pyrimidine metabolism; CTP biosynthesis via de novo pathway; UDP from UMP (UMPK route): step 1/1. With respect to regulation, inhibited by UTP. In terms of biological role, catalyzes the reversible phosphorylation of UMP to UDP. This is Uridylate kinase from Chlamydia abortus (strain DSM 27085 / S26/3) (Chlamydophila abortus).